A 210-amino-acid chain; its full sequence is Uracil phosphoribosyltransferase (210 aa).

5-phospho-alpha-D-ribose 1-diphosphate-binding positions include Arg78, Arg103, and 130–138 (DPMLATGGT). Residues Ile193 and 198–200 (GDA) each bind uracil. Position 199 (Asp199) interacts with 5-phospho-alpha-D-ribose 1-diphosphate.

This sequence belongs to the UPRTase family. It depends on Mg(2+) as a cofactor.

It catalyses the reaction UMP + diphosphate = 5-phospho-alpha-D-ribose 1-diphosphate + uracil. Its pathway is pyrimidine metabolism; UMP biosynthesis via salvage pathway; UMP from uracil: step 1/1. Its activity is regulated as follows. Allosterically activated by GTP. Functionally, catalyzes the conversion of uracil and 5-phospho-alpha-D-ribose 1-diphosphate (PRPP) to UMP and diphosphate. In Stenotrophomonas maltophilia (strain K279a), this protein is Uracil phosphoribosyltransferase.